Consider the following 245-residue polypeptide: MYPVDLHMHTVASTHAYSTLHDYIAEAQQKNIRLFAITDHGPDMADAPHYWHFMNMRVWPRLVDGVGILRGIEANIKNIEGDIDCTGPMLDQVDVIIAGFHEPVFPPQDKDTHTAAMIATMARGDAHIISHPGNPKYPVDIRAIAEAAAKYNVALELNNSSFMHSRKGSEPNCRAIAEAVRDAGGLLSLGSDSHIAFSLGDFTHCERILQEVNFPQDQILNVSPRRVLDFLEQRGMPAIAELANL.

Positions 7, 9, 15, 40, 73, 101, 131, 192, and 194 each coordinate Zn(2+).

This sequence belongs to the PHP family. As to quaternary structure, homotrimer. Zn(2+) is required as a cofactor.

In Pectobacterium carotovorum subsp. carotovorum (strain PC1), this protein is Probable phosphatase PC1_1798.